The following is a 444-amino-acid chain: Phosphoglucosamine mutase (444 aa).

The active-site Phosphoserine intermediate is the Ser-102. Mg(2+) contacts are provided by Ser-102, Asp-241, Asp-243, and Asp-245. The residue at position 102 (Ser-102) is a Phosphoserine.

The protein belongs to the phosphohexose mutase family. It depends on Mg(2+) as a cofactor. Post-translationally, activated by phosphorylation.

The enzyme catalyses alpha-D-glucosamine 1-phosphate = D-glucosamine 6-phosphate. Its function is as follows. Catalyzes the conversion of glucosamine-6-phosphate to glucosamine-1-phosphate. This is Phosphoglucosamine mutase from Histophilus somni (strain 2336) (Haemophilus somnus).